The chain runs to 398 residues: Ubiquitin carboxyl-terminal hydrolase 17-like protein 6 (398 aa).

The USP domain maps to A80–K375. C89 acts as the Nucleophile in catalysis. The active-site Proton acceptor is H334.

Belongs to the peptidase C19 family. USP17 subfamily.

It is found in the nucleus. Its subcellular location is the cytoplasm. The catalysed reaction is Thiol-dependent hydrolysis of ester, thioester, amide, peptide and isopeptide bonds formed by the C-terminal Gly of ubiquitin (a 76-residue protein attached to proteins as an intracellular targeting signal).. Functionally, deubiquitinating enzyme that removes conjugated ubiquitin from specific proteins to regulate different cellular processes that may include cell proliferation, progression through the cell cycle, cell migration, and the cellular response to viral infection. Seems to be non-functional in the regulation of apoptosis. The protein is Ubiquitin carboxyl-terminal hydrolase 17-like protein 6 (USP17L6P) of Homo sapiens (Human).